The chain runs to 196 residues: Phosphoheptose isomerase (196 aa).

One can recognise an SIS domain in the interval 36 to 195 (VIQAYKLGKK…EKELFGEKVD (160 aa)). 51–53 (NGG) contacts substrate. 2 residues coordinate Zn(2+): His60 and Glu64. Residues Glu64, 93–94 (ND), 119–121 (STS), Ser124, and Gln171 contribute to the substrate site. 2 residues coordinate Zn(2+): Gln171 and His179.

It belongs to the SIS family. GmhA subfamily. It depends on Zn(2+) as a cofactor.

It localises to the cytoplasm. The enzyme catalyses 2 D-sedoheptulose 7-phosphate = D-glycero-alpha-D-manno-heptose 7-phosphate + D-glycero-beta-D-manno-heptose 7-phosphate. It participates in carbohydrate biosynthesis; D-glycero-D-manno-heptose 7-phosphate biosynthesis; D-glycero-alpha-D-manno-heptose 7-phosphate and D-glycero-beta-D-manno-heptose 7-phosphate from sedoheptulose 7-phosphate: step 1/1. Its function is as follows. Catalyzes the isomerization of sedoheptulose 7-phosphate in D-glycero-D-manno-heptose 7-phosphate. This chain is Phosphoheptose isomerase, found in Clostridium acetobutylicum (strain ATCC 824 / DSM 792 / JCM 1419 / IAM 19013 / LMG 5710 / NBRC 13948 / NRRL B-527 / VKM B-1787 / 2291 / W).